The following is a 451-amino-acid chain: Tubulin alpha chain (451 aa).

Residue Gln-11 coordinates GTP. Residue Lys-40 is modified to N6-acetyllysine. Glu-71, Gly-144, Thr-145, Thr-179, Asn-206, and Asn-228 together coordinate GTP. Glu-71 lines the Mg(2+) pocket. Glu-254 is an active-site residue.

Belongs to the tubulin family. As to quaternary structure, dimer of alpha and beta chains. A typical microtubule is a hollow water-filled tube with an outer diameter of 25 nm and an inner diameter of 15 nM. Alpha-beta heterodimers associate head-to-tail to form protofilaments running lengthwise along the microtubule wall with the beta-tubulin subunit facing the microtubule plus end conferring a structural polarity. Microtubules usually have 13 protofilaments but different protofilament numbers can be found in some organisms and specialized cells. Requires Mg(2+) as cofactor. Post-translationally, undergoes a tyrosination/detyrosination cycle, the cyclic removal and re-addition of a C-terminal tyrosine residue by the enzymes tubulin tyrosine carboxypeptidase (TTCP) and tubulin tyrosine ligase (TTL), respectively. Acetylation of alpha chains at Lys-40 stabilizes microtubules and affects affinity and processivity of microtubule motors. This modification has a role in multiple cellular functions, ranging from cell motility, cell cycle progression or cell differentiation to intracellular trafficking and signaling.

The protein localises to the cytoplasm. Its subcellular location is the cytoskeleton. It catalyses the reaction GTP + H2O = GDP + phosphate + H(+). In terms of biological role, tubulin is the major constituent of microtubules, a cylinder consisting of laterally associated linear protofilaments composed of alpha- and beta-tubulin heterodimers. Microtubules grow by the addition of GTP-tubulin dimers to the microtubule end, where a stabilizing cap forms. Below the cap, tubulin dimers are in GDP-bound state, owing to GTPase activity of alpha-tubulin. This chain is Tubulin alpha chain (TUBA), found in Triticum aestivum (Wheat).